Here is a 383-residue protein sequence, read N- to C-terminus: L-lactate dehydrogenase (383 aa).

An FMN hydroxy acid dehydrogenase domain is found at 1–380; it reads MIISSTFDYR…THESLASTDA (380 aa). Residue tyrosine 24 participates in substrate binding. Residues serine 106 and glutamine 127 each contribute to the FMN site. Residue tyrosine 129 participates in substrate binding. Threonine 155 is a binding site for FMN. Arginine 164 serves as a coordination point for substrate. Lysine 251 provides a ligand contact to FMN. Catalysis depends on histidine 275, which acts as the Proton acceptor. Residue arginine 278 participates in substrate binding. Residue 306–330 coordinates FMN; the sequence is DSGVRSGLDVVRMIAQGADAVMIGR.

This sequence belongs to the FMN-dependent alpha-hydroxy acid dehydrogenase family. FMN serves as cofactor.

It is found in the cell inner membrane. It carries out the reaction (S)-lactate + A = pyruvate + AH2. Its function is as follows. Catalyzes the conversion of L-lactate to pyruvate. Is coupled to the respiratory chain. The sequence is that of L-lactate dehydrogenase from Bartonella quintana (strain Toulouse) (Rochalimaea quintana).